The chain runs to 354 residues: 3-isopropylmalate dehydrogenase (354 aa).

76–87 (GPRWDSAKERPE) provides a ligand contact to NAD(+). 4 residues coordinate substrate: arginine 94, arginine 104, arginine 130, and aspartate 215. The Mg(2+) site is built by aspartate 215, aspartate 239, and aspartate 243. NAD(+) is bound at residue 273–285 (GSAPDIAGKNKAN).

Belongs to the isocitrate and isopropylmalate dehydrogenases family. LeuB type 1 subfamily. As to quaternary structure, homodimer. It depends on Mg(2+) as a cofactor. Mn(2+) is required as a cofactor.

Its subcellular location is the cytoplasm. The catalysed reaction is (2R,3S)-3-isopropylmalate + NAD(+) = 4-methyl-2-oxopentanoate + CO2 + NADH. The protein operates within amino-acid biosynthesis; L-leucine biosynthesis; L-leucine from 3-methyl-2-oxobutanoate: step 3/4. Functionally, catalyzes the oxidation of 3-carboxy-2-hydroxy-4-methylpentanoate (3-isopropylmalate) to 3-carboxy-4-methyl-2-oxopentanoate. The product decarboxylates to 4-methyl-2 oxopentanoate. The protein is 3-isopropylmalate dehydrogenase of Bacillus cereus (strain ATCC 14579 / DSM 31 / CCUG 7414 / JCM 2152 / NBRC 15305 / NCIMB 9373 / NCTC 2599 / NRRL B-3711).